Reading from the N-terminus, the 255-residue chain is Myogenic factor 5 (255 aa).

The bHLH domain maps to D83–L134. The tract at residues D226 to R249 is disordered.

In terms of assembly, efficient DNA binding requires dimerization with another bHLH protein.

The protein resides in the nucleus. Functionally, acts as a transcriptional activator that promotes transcription of muscle-specific target genes and plays a role in muscle differentiation. Together with MYOG and MYOD1, co-occupies muscle-specific gene promoter core region during myogenesis. Induces fibroblasts to differentiate into myoblasts. Probable sequence specific DNA-binding protein. The chain is Myogenic factor 5 (Myf5) from Mus musculus (Mouse).